The sequence spans 971 residues: Outer capsid protein VP2 (971 aa).

Belongs to the orbivirus VP2 family.

The protein localises to the virion. The VP2 protein is one of the two proteins (with VP5) which constitute the virus particle outer capsid. It is the major target of the host immunogenic response. This chain is Outer capsid protein VP2 (Segment-2), found in Epizootic hemorrhagic disease virus 1 (EHDV-1).